A 95-amino-acid chain; its full sequence is Small ribosomal subunit protein bS18 (95 aa).

Belongs to the bacterial ribosomal protein bS18 family. In terms of assembly, part of the 30S ribosomal subunit. Forms a tight heterodimer with protein bS6.

Functionally, binds as a heterodimer with protein bS6 to the central domain of the 16S rRNA, where it helps stabilize the platform of the 30S subunit. The chain is Small ribosomal subunit protein bS18 from Rickettsia canadensis (strain McKiel).